The chain runs to 277 residues: Pantothenate synthetase (277 aa).

ATP is bound at residue 26–33 (MGNLHEGH). Catalysis depends on His-33, which acts as the Proton donor. (R)-pantoate is bound at residue Gln-57. Residue Gln-57 coordinates beta-alanine. 144–147 (GKKD) lines the ATP pocket. Gln-150 is a (R)-pantoate binding site. ATP is bound by residues Val-173 and 181 to 184 (LSSR).

The protein belongs to the pantothenate synthetase family. In terms of assembly, homodimer.

It is found in the cytoplasm. The enzyme catalyses (R)-pantoate + beta-alanine + ATP = (R)-pantothenate + AMP + diphosphate + H(+). Its pathway is cofactor biosynthesis; (R)-pantothenate biosynthesis; (R)-pantothenate from (R)-pantoate and beta-alanine: step 1/1. Its function is as follows. Catalyzes the condensation of pantoate with beta-alanine in an ATP-dependent reaction via a pantoyl-adenylate intermediate. The protein is Pantothenate synthetase of Paraburkholderia phymatum (strain DSM 17167 / CIP 108236 / LMG 21445 / STM815) (Burkholderia phymatum).